We begin with the raw amino-acid sequence, 429 residues long: Cell cycle protein kinase spo4 (429 aa).

One can recognise a Protein kinase domain in the interval Tyr40–Phe402. ATP-binding positions include Val46–Val54 and Lys95. Catalysis depends on Asp182, which acts as the Proton acceptor. Thr264 carries the phosphothreonine modification.

It belongs to the protein kinase superfamily. Ser/Thr protein kinase family. CDC7 subfamily. As to quaternary structure, interacts with spo6.

It localises to the nucleus. It catalyses the reaction L-seryl-[protein] + ATP = O-phospho-L-seryl-[protein] + ADP + H(+). The catalysed reaction is L-threonyl-[protein] + ATP = O-phospho-L-threonyl-[protein] + ADP + H(+). Functionally, required for the initiation of meiosis II and progression through anaphase II. In Schizosaccharomyces pombe (strain 972 / ATCC 24843) (Fission yeast), this protein is Cell cycle protein kinase spo4 (spo4).